The sequence spans 435 residues: Enolase (435 aa).

Q163 lines the (2R)-2-phosphoglycerate pocket. E205 (proton donor) is an active-site residue. 3 residues coordinate Mg(2+): D243, E292, and D319. Residues K344, R373, S374, and K395 each coordinate (2R)-2-phosphoglycerate. Catalysis depends on K344, which acts as the Proton acceptor.

The protein belongs to the enolase family. It depends on Mg(2+) as a cofactor.

The protein localises to the cytoplasm. The protein resides in the secreted. Its subcellular location is the cell surface. It catalyses the reaction (2R)-2-phosphoglycerate = phosphoenolpyruvate + H2O. It participates in carbohydrate degradation; glycolysis; pyruvate from D-glyceraldehyde 3-phosphate: step 4/5. In terms of biological role, catalyzes the reversible conversion of 2-phosphoglycerate (2-PG) into phosphoenolpyruvate (PEP). It is essential for the degradation of carbohydrates via glycolysis. This Streptococcus uberis (strain ATCC BAA-854 / 0140J) protein is Enolase.